Consider the following 89-residue polypeptide: Large ribosomal subunit protein bL31B (89 aa).

Belongs to the bacterial ribosomal protein bL31 family. Type B subfamily. As to quaternary structure, part of the 50S ribosomal subunit.

The sequence is that of Large ribosomal subunit protein bL31B from Enterococcus faecalis (strain ATCC 700802 / V583).